The chain runs to 454 residues: Probable diacyglycerol O-acyltransferase tgs2 (454 aa).

Histidine 139 acts as the Proton acceptor in catalysis.

This sequence belongs to the long-chain O-acyltransferase family.

The catalysed reaction is an acyl-CoA + a 1,2-diacyl-sn-glycerol = a triacyl-sn-glycerol + CoA. The enzyme catalyses a long chain fatty alcohol + a fatty acyl-CoA = a wax ester + CoA. Its pathway is glycerolipid metabolism; triacylglycerol biosynthesis. Its function is as follows. Catalyzes the terminal and only committed step in triacylglycerol synthesis by using diacylglycerol and fatty acyl CoA as substrates. Required for storage lipid synthesis. The chain is Probable diacyglycerol O-acyltransferase tgs2 (tgs2) from Mycobacterium tuberculosis (strain CDC 1551 / Oshkosh).